The chain runs to 721 residues: Protein mu-NS (721 aa).

Residues 1-13 are interaction with sigma-NS; it reads MASFKGFSVNTVP. Positions 1–38 are RNA-binding; sequence MASFKGFSVNTVPVSKAKRDISSLAATPGIRSQPFTPS. Residues 14-40 form an interaction with mu-2 region; sequence VSKAKRDISSLAATPGIRSQPFTPSVD. Residues 471 to 721 form an involved in the formation of factory-like inclusions region; it reads SSDMVDGIKL…IDFSVPTDEL (251 aa). 2 coiled-coil regions span residues 523-560 and 628-686; these read LLSQ…SAQA and QMNG…NQRQ.

It belongs to the orthoreovirus mu-NS protein family. Interacts with mu-2. Interacts with sigma-NS; in viral factories. Interacts with the inner capsid proteins lambda-1 and sigma-2, and outer capsid protein lambda-2; in viral factories. In terms of processing, the N-terminus is blocked.

It localises to the host cytoplasm. In terms of biological role, non-structural protein implicated with protein sigma-NS in forming the matrix of viral factories, which are large inclusions in the host cytoplasm where replication intermediates are assembled and viral RNA replication takes place. Together with mu-2, recruits the other core proteins to these factories. The sequence is that of Protein mu-NS (M3) from Mammalia (T1L).